Consider the following 580-residue polypeptide: Mucin-1 (580 aa).

The first 22 residues, 1-22 (MTPDIQAPFLSLLLLFPVLTVA), serve as a signal peptide directing secretion. The Extracellular portion of the chain corresponds to 23-489 (NVPTLTTSDS…GSGVPGWGIA (467 aa)). Residues 28 to 37 (TTSDSINPRR) are compositionally biased toward polar residues. Residues 28-359 (TTSDSINPRR…SIALSTSSNP (332 aa)) form a disordered region. Residues 38-88 (TTPVSTTQSSPTSSPTKETSWSTTTTLLTASSPAPSPAASPGHDGASTPTS) show a composition bias toward low complexity. Tandem repeats lie at residues 70–89 (PAPS…PTSS), 90–109 (PAPS…PTSS), 110–129 (PAPS…PTSS), 130–149 (PAPS…PTSS), 150–169 (PAPS…PTGS), 170–189 (PAPS…PTSS), 190–209 (PAPS…PTGS), 210–229 (PAPS…PTSS), 230–249 (PAPS…PTGS), 250–269 (PAPS…LTSS), and 270–289 (PAPS…PTSS). An 11 X 20 AA approximate tandem repeats of P-A-P-S-P-A-A-S-P-G-H-D-G-A-S-T-P-T-S-S region spans residues 70–289 (PAPSPAASPG…QHGASSPTSS (220 aa)). O-linked (GalNAc...) serine glycosylation is found at Ser73, Ser77, and Ser84. Residues Thr85 and Thr87 are each glycosylated (O-linked (GalNAc...) threonine). 2 O-linked (GalNAc...) serine glycosylation sites follow: Ser88 and Ser89. 9 stretches are compositionally biased toward low complexity: residues 96–108 (ASPG…TPTS), 116–128 (ASPG…TPTS), 136–148 (ASPG…TPTS), 156–168 (ASPG…SPTG), 176–188 (ASPG…TPTS), 196–208 (ASPG…SPTG), 216–228 (ASPG…TPTS), 236–248 (ASPG…SPTG), and 256–306 (ASPG…MVTS). Asn161 carries an N-linked (GlcNAc...) asparagine glycan. A glycan (N-linked (GlcNAc...) asparagine) is linked at Asn201. N-linked (GlcNAc...) asparagine glycosylation is present at Asn241. Polar residues predominate over residues 308–344 (HKGTSSRATMTPVSKGTPSSVPSSETAPTAASHITRT). The segment covering 345–357 (AASSPSIALSTSS) has biased composition (low complexity). One can recognise an SEA domain in the interval 368 to 475 (RVSLYFLSFR…VSVYSAPFPS (108 aa)). Asn384 and Asn460 each carry an N-linked (GlcNAc...) asparagine glycan. The chain crosses the membrane as a helical span at residues 490–510 (LLVLVCVLVALAIIYLIALVV). S-palmitoyl cysteine attachment occurs at residues Cys511 and Cys513. Over 511–580 (CQCGRKKCEQ…TNLAATSANL (70 aa)) the chain is Cytoplasmic. Residues 519-555 (EQLDVFPTLDAYHPMSEYSTYHTHGRYVPPGSTKRSP) are interaction with P53. Tyr530 bears the Phosphotyrosine; by PDGFR mark. An Interaction with GRB2 motif is present at residues 530 to 533 (YHPM). Tyr539 carries the phosphotyrosine modification. Residues 544 to 563 (RYVPPGSTKRSPYEEVSAGN) are disordered. Residue Tyr545 is modified to Phosphotyrosine; by PDGFR. Residues 550–557 (STKRSPYE) are required for interaction with GSK3B. Thr551 is subject to Phosphothreonine; by PKC/PRKCD. The residue at position 554 (Ser554) is a Phosphoserine; by GSK3-beta. Tyr556 is modified (phosphotyrosine; by CSK, EGFR and SRC). The short motif at 556–559 (YEEV) is the Interaction with SRC and ESR1 element. The segment at 560 to 568 (SAGNGGSNL) is required for interaction with beta- and gamma-catenins. The residue at position 570 (Tyr570) is a Phosphotyrosine. Positions 570–572 (YTN) match the Required for interaction with AP1S2 motif.

As to quaternary structure, the alpha subunit forms a tight, non-covalent heterodimeric complex with the proteolytically-released beta subunit. Binds directly the SH2 domain of GRB2, and forms a MUC1/GRB2/SOS1 complex involved in RAS signaling. The cytoplasmic tail (MUC1CT) interacts with several proteins such as, SRC, CTNNB1 and ERBs. Interaction with the SH2 domain of CSK decreases interaction with GSK3B. Interacts with CTNNB1/beta-catenin and JUP/gamma-catenin and promotes cell adhesion. Interaction with JUP/gamma-catenin is induced by heregulin. Binds PRKCD, ERBB2, ERBB3 and ERBB4. Heregulin (HRG) stimulates the interaction with ERBB2 and, to a much lesser extent, the interaction with ERBB3 and ERBB4. Interacts with P53 in response to DNA damage. Interacts with KLF4. Interacts with estrogen receptor alpha/ESR1, through its DNA-binding domain, and stimulates its transcription activity. Binds ADAM17. In terms of processing, highly glycosylated (N- and O-linked carbohydrates and sialic acid). O-linked glycosylation consists mainly of GalNAc, galactose, and sialic acid. The ratio from pools of milk from different dairy breeds is GalNAc: GlcNAc:galactose:mannose:sialic acid is 14:1:10:1:15. Post-translationally, proteolytic cleavage in the SEA domain occurs in the endoplasmic reticulum by an autoproteolytic mechanism and requires the full-length SEA domain as well as requiring a Ser, Thr or Cys residue at the P + 1 site. Ectodomain shedding is mediated by ADAM17 in uterine epithelial cells. Dual palmitoylation on cysteine residues in the CQC motif is required for recycling from endosomes back to the plasma membrane. In terms of processing, phosphorylated on tyrosines and serine residues in the C-terminal. Phosphorylation on tyrosines in the C-terminal increases the nuclear location of MUC1 and beta-catenin. Phosphorylation by PKC delta induces binding of MUC1 to beta-catenin/CTNNB1 and thus decreases the formation of the beta-catenin/E-cadherin complex. Src-mediated phosphorylation inhibits interaction with GSK3B. Csk- or Src- or EGFR-mediated phosphorylation on Tyr-556 increases binding to beta-catenin/CTNNB1. GSK3B-mediated phosphorylation on Ser-554 decreases this interaction but restores the formation of the beta-cadherin/E-cadherin complex. On T-cell receptor activation, phosphorylated by LCK. PDGFR-mediated phosphorylation increases nuclear colocalization of MUC1CT and CTNNB1. In terms of tissue distribution, expressed on the apical surface of epithelia cells, and on the milk fat globule membrane (MGGM).

It is found in the apical cell membrane. It localises to the cell membrane. The protein resides in the cytoplasm. Its subcellular location is the nucleus. In terms of biological role, the alpha subunit has cell adhesive properties. May provide a protective layer on epithelial cells against bacterial and enzyme attack. Functionally, the beta subunit contains a C-terminal domain which is involved in cell signaling, through phosphorylations and protein-protein interactions. Modulates signaling in ERK, Src and NF-kappa-B pathways. In activated T-cells, influences directly or indirectly the Ras/MAPK pathway. Promotes tumor progression. Regulates P53-mediated transcription and determines cell fate in the genotoxic stress response. Binds, together with KLF4, the PE21 promoter element of P53 and represses P53 activity. In Bos taurus (Bovine), this protein is Mucin-1 (MUC1).